Here is a 313-residue protein sequence, read N- to C-terminus: Glutathione synthetase (313 aa).

Residues 125–309 (KLFVMDFTEL…IAAKIWDVIE (185 aa)) form the ATP-grasp domain. 151–207 (RAEHGAVVMKPLHGHGGAAVFRVLPQDINFGSLYDMFAVTFREPWVIQRFLPEVKHG) serves as a coordination point for ATP. Mg(2+) is bound by residues Glu280 and Asn282.

It belongs to the prokaryotic GSH synthase family. Mg(2+) is required as a cofactor. Requires Mn(2+) as cofactor.

It catalyses the reaction gamma-L-glutamyl-L-cysteine + glycine + ATP = glutathione + ADP + phosphate + H(+). It functions in the pathway sulfur metabolism; glutathione biosynthesis; glutathione from L-cysteine and L-glutamate: step 2/2. The sequence is that of Glutathione synthetase from Rhodopseudomonas palustris (strain ATCC BAA-98 / CGA009).